Consider the following 339-residue polypeptide: Methionine synthase (339 aa).

3 residues coordinate Zn(2+): H212, C214, and C295.

It belongs to the archaeal MetE family. The cofactor is Zn(2+).

It functions in the pathway amino-acid biosynthesis; L-methionine biosynthesis via de novo pathway. Functionally, catalyzes the transfer of a methyl group to L-homocysteine resulting in methionine formation. The physiological methyl donor is unknown. The sequence is that of Methionine synthase from Sulfolobus acidocaldarius (strain ATCC 33909 / DSM 639 / JCM 8929 / NBRC 15157 / NCIMB 11770).